Reading from the N-terminus, the 436-residue chain is Probable glucose-6-phosphate isomerase (436 aa).

Glu-272 (proton donor) is an active-site residue. Residues His-293 and Lys-404 contribute to the active site.

It belongs to the GPI family.

Its subcellular location is the cytoplasm. It catalyses the reaction alpha-D-glucose 6-phosphate = beta-D-fructose 6-phosphate. The protein operates within carbohydrate biosynthesis; gluconeogenesis. Its pathway is carbohydrate degradation; glycolysis; D-glyceraldehyde 3-phosphate and glycerone phosphate from D-glucose: step 2/4. Its function is as follows. Catalyzes the reversible isomerization of glucose-6-phosphate to fructose-6-phosphate. This chain is Probable glucose-6-phosphate isomerase, found in Haloarcula marismortui (strain ATCC 43049 / DSM 3752 / JCM 8966 / VKM B-1809) (Halobacterium marismortui).